The following is a 270-amino-acid chain: 4-hydroxy-tetrahydrodipicolinate reductase (270 aa).

NAD(+) is bound by residues 9 to 14 (GAGGRM) and Glu-35. Arg-36 contributes to the NADP(+) binding site. NAD(+) contacts are provided by residues 99-101 (GTT) and 123-126 (ASNF). Residue His-156 is the Proton donor/acceptor of the active site. His-157 contacts (S)-2,3,4,5-tetrahydrodipicolinate. Residue Lys-160 is the Proton donor of the active site. Position 166 to 167 (166 to 167 (GT)) interacts with (S)-2,3,4,5-tetrahydrodipicolinate.

It belongs to the DapB family.

The protein resides in the cytoplasm. It catalyses the reaction (S)-2,3,4,5-tetrahydrodipicolinate + NAD(+) + H2O = (2S,4S)-4-hydroxy-2,3,4,5-tetrahydrodipicolinate + NADH + H(+). The enzyme catalyses (S)-2,3,4,5-tetrahydrodipicolinate + NADP(+) + H2O = (2S,4S)-4-hydroxy-2,3,4,5-tetrahydrodipicolinate + NADPH + H(+). It participates in amino-acid biosynthesis; L-lysine biosynthesis via DAP pathway; (S)-tetrahydrodipicolinate from L-aspartate: step 4/4. Functionally, catalyzes the conversion of 4-hydroxy-tetrahydrodipicolinate (HTPA) to tetrahydrodipicolinate. The chain is 4-hydroxy-tetrahydrodipicolinate reductase from Haemophilus influenzae (strain PittGG).